We begin with the raw amino-acid sequence, 194 residues long: Chorion class B protein ERB4 (194 aa).

A signal peptide spans 1 to 20 (MSSNVIVLCVSALFIQCAVS). The segment at 22–72 (CVGRIGSLRGGPFDGWGYDGLGYDGFGIGGWNGRGCGGLGDDIAAAAALGA) is left arm. A central domain region spans residues 73–128 (SHGGTLAVVSTSAAPTGLGIASENVYEGSVGVCGNLPFLGTADVAGEFPTAGLGGI). The segment at 129–194 (DYTCGDGAVG…RGCGCGANYY (66 aa)) is right arm (Gly-rich tandem repeats).

Belongs to the chorion protein family.

Its function is as follows. This protein is one of many from the eggshell of the silk moth. The chain is Chorion class B protein ERB4 from Bombyx mori (Silk moth).